The sequence spans 165 residues: Large ribosomal subunit protein uL30 (165 aa).

The protein belongs to the universal ribosomal protein uL30 family. Part of the 50S ribosomal subunit.

The polypeptide is Large ribosomal subunit protein uL30 (Thermoplasma acidophilum (strain ATCC 25905 / DSM 1728 / JCM 9062 / NBRC 15155 / AMRC-C165)).